Consider the following 573-residue polypeptide: uncharacterized protein (573 aa).

2 disordered regions span residues Met-1–Arg-33 and Leu-60–Asp-101. A compositionally biased stretch (polar residues) spans Leu-60–Asn-70. Asn-63 carries an N-linked (GlcNAc...) asparagine glycan. Residues Ser-84–Asn-95 are compositionally biased toward low complexity. Repeat copies occupy residues Asn-102 to Met-103, Asn-104 to Met-105, Asn-106 to Met-107, Asn-108 to Met-109, Asn-110 to Met-111, Asn-112 to Met-113, Asn-114 to Met-115, Asn-116 to Met-117, Asn-118 to Met-119, and Asn-120 to Met-121. Residues Asn-102–Met-121 are 10 X 2 AA tandem repeats of N-M. Asn-123 carries an N-linked (GlcNAc...) asparagine glycan. Disordered regions lie at residues Ile-150–Arg-174, Gln-192–Asn-271, Lys-286–Ser-317, and Asn-357–Thr-379. A compositionally biased stretch (polar residues) spans Ser-157 to Asn-170. Residues Leu-208–Leu-225 show a composition bias toward low complexity. The span at Thr-226–Lys-252 shows a compositional bias: polar residues. Asn-236 is a glycosylation site (N-linked (GlcNAc...) asparagine). N-linked (GlcNAc...) asparagine glycosylation is found at Asn-437 and Asn-442. Low complexity-rich tracts occupy residues Ile-441 to Ser-457 and Ser-466 to Lys-483. The tract at residues Ile-441–Lys-483 is disordered. Asn-498, Asn-535, and Asn-541 each carry an N-linked (GlcNAc...) asparagine glycan.

It to yeast AFR1. Post-translationally, N-glycosylated.

This is an uncharacterized protein from Saccharomyces cerevisiae (strain ATCC 204508 / S288c) (Baker's yeast).